Here is an 886-residue protein sequence, read N- to C-terminus: Receptor-like kinase TMK2 (886 aa).

A signal peptide spans 1–20 (MIAKNFLLLLCFIALVNVES). Over 21–460 (SPDEAVMIAL…GKKASSNAGK (440 aa)) the chain is Extracellular. Residue N41 is glycosylated (N-linked (GlcNAc...) asparagine). Residues C48 and C56 are joined by a disulfide bond. LRR repeat units follow at residues 59 to 83 (SNRV…LGKL), 84 to 106 (TSLT…LAGL), 107 to 129 (KSLV…FFSG), 131 to 155 (SSLQ…LENA), 157 to 179 (SLVD…LFEG), 182 to 206 (FSSL…FSDS), 208 to 232 (VQVL…LQKM), 233 to 254 (TSLT…DFSG), 255 to 279 (LVSL…LFEL), and 281 to 302 (SLSD…FTAP). N-linked (GlcNAc...) asparagine glycans are attached at residues N154, N167, and N202. Residue N237 is glycosylated (N-linked (GlcNAc...) asparagine). N298 carries an N-linked (GlcNAc...) asparagine glycan. Intrachain disulfides connect C315–C323 and C353–C361. LRR repeat units lie at residues 363 to 386 (GTDI…RFAD), 387 to 410 (FASL…ELAK), and 411 to 438 (LSNL…IVNT). N377, N394, N401, N432, and N437 each carry an N-linked (GlcNAc...) asparagine glycan. The chain crosses the membrane as a helical span at residues 461-481 (IVGSVIGILLALLLIGVAIFF). Topologically, residues 482–886 (LVKKKMQYHK…ESTFKSGQGR (405 aa)) are cytoplasmic. The 281-residue stretch at 547–827 (FDEKNILGRG…HVVNVLVSLV (281 aa)) folds into the Protein kinase domain. Residues 553–561 (LGRGGFGIV) and K575 each bind ATP. D676 (proton acceptor) is an active-site residue.

The protein belongs to the protein kinase superfamily. Ser/Thr protein kinase family. In terms of tissue distribution, expressed in siliques and flowers.

Its subcellular location is the membrane. The catalysed reaction is L-seryl-[protein] + ATP = O-phospho-L-seryl-[protein] + ADP + H(+). The enzyme catalyses L-threonyl-[protein] + ATP = O-phospho-L-threonyl-[protein] + ADP + H(+). Involved in auxin signal transduction and cell expansion and proliferation regulation. This Arabidopsis thaliana (Mouse-ear cress) protein is Receptor-like kinase TMK2.